The primary structure comprises 279 residues: DegV domain-containing protein CPE1310 (279 aa).

The DegV domain occupies I4 to E277. Residues T62 and S94 each coordinate hexadecanoate.

May bind long-chain fatty acids, such as palmitate, and may play a role in lipid transport or fatty acid metabolism. The chain is DegV domain-containing protein CPE1310 from Clostridium perfringens (strain 13 / Type A).